A 132-amino-acid polypeptide reads, in one-letter code: MAREFKRSDRVAQEIQKEIAVILQREVKDPRIGMVTVSDVEVSSDLAYAKVFVTFLFDNDESAIDAGMKGLEKASPYIRSLLGKAMRLRIVPEIRFIYDRSLIEGMRMSNLVSNVIREDNARHIDDDVSEEK.

Belongs to the RbfA family. Monomer. Binds 30S ribosomal subunits, but not 50S ribosomal subunits or 70S ribosomes.

It is found in the cytoplasm. One of several proteins that assist in the late maturation steps of the functional core of the 30S ribosomal subunit. Associates with free 30S ribosomal subunits (but not with 30S subunits that are part of 70S ribosomes or polysomes). Required for efficient processing of 16S rRNA. May interact with the 5'-terminal helix region of 16S rRNA. This chain is Ribosome-binding factor A, found in Pasteurella multocida (strain Pm70).